The following is a 365-amino-acid chain: tRNA N6-adenosine threonylcarbamoyltransferase (365 aa).

The Fe cation site is built by His119 and His123. Substrate contacts are provided by residues Leu141–Gly145, Asp174, Gly187, and Asn288. A Fe cation-binding site is contributed by Asp316.

Belongs to the KAE1 / TsaD family. The cofactor is Fe(2+).

It localises to the cytoplasm. It catalyses the reaction L-threonylcarbamoyladenylate + adenosine(37) in tRNA = N(6)-L-threonylcarbamoyladenosine(37) in tRNA + AMP + H(+). Functionally, required for the formation of a threonylcarbamoyl group on adenosine at position 37 (t(6)A37) in tRNAs that read codons beginning with adenine. Is involved in the transfer of the threonylcarbamoyl moiety of threonylcarbamoyl-AMP (TC-AMP) to the N6 group of A37, together with TsaE and TsaB. TsaD likely plays a direct catalytic role in this reaction. This is tRNA N6-adenosine threonylcarbamoyltransferase from Rhizobium johnstonii (strain DSM 114642 / LMG 32736 / 3841) (Rhizobium leguminosarum bv. viciae).